We begin with the raw amino-acid sequence, 412 residues long: NFATC2-interacting protein (412 aa).

The disordered stretch occupies residues 1-38 (MAEPLRGRGPRSRGGRGARRARGARGRCPRARQSPARL). The segment covering 8–30 (RGPRSRGGRGARRARGARGRCPR) has biased composition (basic residues). A phosphoserine mark is found at Ser-49, Ser-51, Ser-79, Ser-81, and Ser-83. Residues 58–115 (VADPVEVPVARLPAPAKPEQDSDSDSEGAAEGPAGAPRTLVRRRRRRLLDPGEAPVVP) are disordered. Residues 86-96 (AAEGPAGAPRT) are compositionally biased toward low complexity. Phosphoserine is present on Ser-118. Lys-120 is covalently cross-linked (Glycyl lysine isopeptide (Lys-Gly) (interchain with G-Cter in SUMO2)). The tract at residues 136–206 (KLCPSEPEDE…SSRNKSRKHT (71 aa)) is disordered. The stretch at 168 to 227 (RKKLRKKCEKEEKKMEEFPDQDISPLPQPSSRNKSRKHTEALQKLREVNKRLQDLRSCLS) forms a coiled coil. Basic and acidic residues predominate over residues 175–184 (CEKEEKKMEE). Phosphoserine occurs at positions 191, 197, and 307. Residues Thr-309 and Thr-311 each carry the phosphothreonine modification. In terms of domain architecture, Ubiquitin-like spans 341–412 (LRLRVQGKEK…ESGDLIEVWG (72 aa)). Phosphoserine occurs at positions 362 and 383.

Interacts with NFATC2, TRAF1, TRAF2 and PRMT1. Interacts with UBE2I/UBC9. Methylation at the N-terminus by PRMT1 modulates interaction with the NFAT complex and results in augmented cytokine production. Highest level detected in spleen, thymus and testis.

The protein resides in the nucleus. It is found in the cytoplasm. Functionally, in T-helper 2 (Th2) cells, regulates the magnitude of NFAT-driven transcription of a specific subset of cytokine genes, including IL3, IL4, IL5 and IL13, but not IL2. Recruits PRMT1 to the IL4 promoter; this leads to enhancement of histone H4 'Arg-3'-methylation and facilitates subsequent histone acetylation at the IL4 locus, thus promotes robust cytokine expression. Down-regulates formation of poly-SUMO chains by UBE2I/UBC9. This is NFATC2-interacting protein (Nfatc2ip) from Mus musculus (Mouse).